Here is an 808-residue protein sequence, read N- to C-terminus: Phenylalanine--tRNA ligase beta subunit (808 aa).

Positions 40 to 155 (NQGATGVVVG…DDVEIGSDAL (116 aa)) constitute a tRNA-binding domain. In terms of domain architecture, B5 spans 409-484 (IEEPVVSLNL…RLYGYDNIPT (76 aa)). Mg(2+)-binding residues include Asp462, Asp468, Glu471, and Glu472. The FDX-ACB domain maps to 714-807 (PRFPAISRDI…LEASTGAVLR (94 aa)).

Belongs to the phenylalanyl-tRNA synthetase beta subunit family. Type 1 subfamily. As to quaternary structure, tetramer of two alpha and two beta subunits. Mg(2+) serves as cofactor.

Its subcellular location is the cytoplasm. The enzyme catalyses tRNA(Phe) + L-phenylalanine + ATP = L-phenylalanyl-tRNA(Phe) + AMP + diphosphate + H(+). This chain is Phenylalanine--tRNA ligase beta subunit (pheT), found in Halalkalibacterium halodurans (strain ATCC BAA-125 / DSM 18197 / FERM 7344 / JCM 9153 / C-125) (Bacillus halodurans).